We begin with the raw amino-acid sequence, 144 residues long: RNA-binding protein 1 (144 aa).

Positions 11-84 constitute an RRM domain; it reads CKVYVGNLGS…TRIRVEMSSG (74 aa). Residues 78–115 form a disordered region; that stretch reads RVEMSSGRSRDRRRGEGGSSGRSGSGRYRITPSARTTS.

This sequence belongs to the splicing factor SR family. As to quaternary structure, interacts with x16 (via Arg/Ser-rich region). Post-translationally, extensively phosphorylated on serine residues in the RS domain. In terms of processing, the tandem heptapeptide repeats in the C-terminal domain (CTD) can be highly phosphorylated. The phosphorylation activates Pol II. Phosphorylation occurs at residues 'Ser-2', 'Ser-5' and 'Ser-7' of the heptapeptide repeat and is mediated by P-TEFb. Dephosphorylated by the INTAC complex when transcripts are unfavorably configured for transcriptional elongation, leading to premature transcription termination: dephosphorylation is mediated by the mts/PP2A component of the INTAC complex. Ubiquitous.

It is found in the nucleus. Contributes to the activation of female-specific DSX splicing in vivo by recognizing the RBP1 target sequences within the purine-rich polypyrimidine tract of the female-specific 3' splice site. In Drosophila melanogaster (Fruit fly), this protein is RNA-binding protein 1 (Rbp1).